Reading from the N-terminus, the 451-residue chain is Phosphoglucosamine mutase (451 aa).

The Phosphoserine intermediate role is filled by Ser-102. Mg(2+) contacts are provided by Ser-102, Asp-242, Asp-244, and Asp-246. The residue at position 102 (Ser-102) is a Phosphoserine.

It belongs to the phosphohexose mutase family. Mg(2+) serves as cofactor. Activated by phosphorylation.

The catalysed reaction is alpha-D-glucosamine 1-phosphate = D-glucosamine 6-phosphate. In terms of biological role, catalyzes the conversion of glucosamine-6-phosphate to glucosamine-1-phosphate. This is Phosphoglucosamine mutase from Staphylococcus saprophyticus subsp. saprophyticus (strain ATCC 15305 / DSM 20229 / NCIMB 8711 / NCTC 7292 / S-41).